The following is a 273-amino-acid chain: Dermonecrotic toxin LhSicTox-alphaIA1ii (273 aa).

His5 is an active-site residue. Residues Glu25 and Asp27 each contribute to the Mg(2+) site. The Nucleophile role is filled by His41. Intrachain disulfides connect Cys45–Cys51 and Cys47–Cys190. Mg(2+) is bound at residue Asp85.

Belongs to the arthropod phospholipase D family. Class II subfamily. Mg(2+) serves as cofactor. Expressed by the venom gland.

Its subcellular location is the secreted. The enzyme catalyses an N-(acyl)-sphingosylphosphocholine = an N-(acyl)-sphingosyl-1,3-cyclic phosphate + choline. It carries out the reaction an N-(acyl)-sphingosylphosphoethanolamine = an N-(acyl)-sphingosyl-1,3-cyclic phosphate + ethanolamine. It catalyses the reaction a 1-acyl-sn-glycero-3-phosphocholine = a 1-acyl-sn-glycero-2,3-cyclic phosphate + choline. The catalysed reaction is a 1-acyl-sn-glycero-3-phosphoethanolamine = a 1-acyl-sn-glycero-2,3-cyclic phosphate + ethanolamine. Its function is as follows. Dermonecrotic toxins cleave the phosphodiester linkage between the phosphate and headgroup of certain phospholipids (sphingolipid and lysolipid substrates), forming an alcohol (often choline) and a cyclic phosphate. This toxin acts on sphingomyelin (SM). It may also act on ceramide phosphoethanolamine (CPE), lysophosphatidylcholine (LPC) and lysophosphatidylethanolamine (LPE), but not on lysophosphatidylserine (LPS), and lysophosphatidylglycerol (LPG). It acts by transphosphatidylation, releasing exclusively cyclic phosphate products as second products. Induces dermonecrosis, hemolysis, increased vascular permeability, edema, inflammatory response, and platelet aggregation. The chain is Dermonecrotic toxin LhSicTox-alphaIA1ii from Loxosceles hirsuta (Recluse spider).